The following is a 465-amino-acid chain: MGDLRSQPLLRAVLGGLLAGLAPGVAGPLSMLPALALLWSLVERPRDAALWGLFGVLLSHRWLLGLHPLTWMGLPAWLSLPVAVAIWLSCGVAAALLLLLWSLLARLCRRRDGTWRFGAVLLLALVWGAAELLLEGSPLFWIGVGGSVLPLDRPLAGLGRWLGSGGLATLQLLWGWGLWQLWRRRGRRCAWWLISLLLAHAMGALSLSPPPALAALRLGAWQPAIPTREKFSPERQRRFQSALSSALQQAQSLKVEALVAPEGTLPFRWQADEDPLPVPLISGGFRWVRGQQRSSVLLARPDRAGVEPLVDKHRLVPLGEWLPPLPAGLTRGLSAVGGLQPGDASRFVNVWPSPFAVAICYEISDGRALAKATAQGAEWLLTIANLDPYPQLLQRQFLALAQLRAIETGRDVLSVANTGPTALVSADGTVQRLLEPQTDAVAAAELQRRQQLTGYSRLVWAWSSR.

The next 6 membrane-spanning stretches (helical) occupy residues 12-32 (AVLG…LSML), 49-69 (ALWG…LHPL), 80-100 (LPVA…LLLL), 122-142 (LLAL…LFWI), 161-181 (WLGS…LWQL), and 189-209 (CAWW…SLSP). The CN hydrolase domain maps to 221–448 (WQPAIPTREK…DAVAAAELQR (228 aa)). The active-site Proton acceptor is the glutamate 262. Lysine 312 is a catalytic residue. The active-site Nucleophile is cysteine 360.

This sequence belongs to the CN hydrolase family. Apolipoprotein N-acyltransferase subfamily.

It localises to the cell inner membrane. The enzyme catalyses N-terminal S-1,2-diacyl-sn-glyceryl-L-cysteinyl-[lipoprotein] + a glycerophospholipid = N-acyl-S-1,2-diacyl-sn-glyceryl-L-cysteinyl-[lipoprotein] + a 2-acyl-sn-glycero-3-phospholipid + H(+). It functions in the pathway protein modification; lipoprotein biosynthesis (N-acyl transfer). Catalyzes the phospholipid dependent N-acylation of the N-terminal cysteine of apolipoprotein, the last step in lipoprotein maturation. The sequence is that of Apolipoprotein N-acyltransferase from Parasynechococcus marenigrum (strain WH8102).